Reading from the N-terminus, the 197-residue chain is MRNILKVTRFDDGTVQEVVHRDGLRVETYYKSEEGEARANLEQRPPAAADEARTYLSPSSSFSSSSSSSSAVALGARPDLAQGGGRGSERRERGCRWNGCPPLAIVLPVLANLIMCAMLAWYLNPLFSPWVYFNCTNSSLGVGNCSNFFGCSRGNLSVNDSFWPPGSVVFGKDGCAVSASVLGLVGPGVLCNGTGCA.

Residues 103-123 (LAIVLPVLANLIMCAMLAWYL) traverse the membrane as a helical segment.

Its subcellular location is the host membrane. This is an uncharacterized protein from Equus caballus (Horse).